A 221-amino-acid polypeptide reads, in one-letter code: Deoxyribose-phosphate aldolase (221 aa).

The active-site Proton donor/acceptor is the aspartate 89. Catalysis depends on lysine 151, which acts as the Schiff-base intermediate with acetaldehyde. The active-site Proton donor/acceptor is the lysine 180.

It belongs to the DeoC/FbaB aldolase family. DeoC type 1 subfamily.

The protein localises to the cytoplasm. It carries out the reaction 2-deoxy-D-ribose 5-phosphate = D-glyceraldehyde 3-phosphate + acetaldehyde. It participates in carbohydrate degradation; 2-deoxy-D-ribose 1-phosphate degradation; D-glyceraldehyde 3-phosphate and acetaldehyde from 2-deoxy-alpha-D-ribose 1-phosphate: step 2/2. Its function is as follows. Catalyzes a reversible aldol reaction between acetaldehyde and D-glyceraldehyde 3-phosphate to generate 2-deoxy-D-ribose 5-phosphate. The polypeptide is Deoxyribose-phosphate aldolase (Brevibacillus brevis (strain 47 / JCM 6285 / NBRC 100599)).